The primary structure comprises 1110 residues: Coiled-coil domain-containing protein 150 (1110 aa).

4 coiled-coil regions span residues 122-250, 288-313, 413-695, and 728-1048; these read LENL…TSAS, QDLLAQEQRKNEDLGMTISQLKSDLN, AAHA…KEDN, and SEIA…EAHR.

This chain is Coiled-coil domain-containing protein 150 (Ccdc150), found in Mus musculus (Mouse).